We begin with the raw amino-acid sequence, 106 residues long: Probable insulin-like peptide beta-type 1 (106 aa).

An N-terminal signal peptide occupies residues 1–19 (MFSFFTYFLLSALLLSASC). Residues 20 to 51 (RQPSMDTSKADRILREIEMETELENQLSRARR) constitute a propeptide, removed; by convertase egl-3. 4 disulfides stabilise this stretch: Cys-60–Cys-89, Cys-72–Cys-102, Cys-76–Cys-103, and Cys-88–Cys-93.

This sequence belongs to the insulin family. As to expression, expressed by ASI and ASJ sensory neurons and weakly by ventral cord motor neurons.

The protein resides in the secreted. Functionally, probable insulin-like peptide which negatively regulates synapse development at the neuromuscular junctions. Probably acts as a daf-2/InsR agonist ligand to prevent dauer formation under optimal environmental conditions. This chain is Probable insulin-like peptide beta-type 1 (ins-4), found in Caenorhabditis elegans.